Here is a 38-residue protein sequence, read N- to C-terminus: MKVRASVKKLCRNCKIIRRDGVVRVICSAEPRHKQRQG.

The protein belongs to the bacterial ribosomal protein bL36 family.

This is Large ribosomal subunit protein bL36 from Stutzerimonas stutzeri (strain A1501) (Pseudomonas stutzeri).